The primary structure comprises 247 residues: Putative methyltransferase GWCH70_2453 (247 aa).

Belongs to the methyltransferase superfamily.

Functionally, may be a S-adenosyl-L-methionine (SAM)-dependent methyltransferase. This is Putative methyltransferase GWCH70_2453 from Geobacillus sp. (strain WCH70).